The sequence spans 89 residues: Signal recognition particle 19 kDa protein (89 aa).

It belongs to the SRP19 family. Part of the signal recognition particle protein translocation system, which is composed of SRP and FtsY. Archaeal SRP consists of a 7S RNA molecule of 300 nucleotides and two protein subunits: SRP54 and SRP19.

Its subcellular location is the cytoplasm. In terms of biological role, involved in targeting and insertion of nascent membrane proteins into the cytoplasmic membrane. Binds directly to 7S RNA and mediates binding of the 54 kDa subunit of the SRP. This is Signal recognition particle 19 kDa protein from Methanococcus vannielii (strain ATCC 35089 / DSM 1224 / JCM 13029 / OCM 148 / SB).